A 341-amino-acid chain; its full sequence is Ferrochelatase (341 aa).

2 residues coordinate Fe cation: His196 and Glu277.

This sequence belongs to the ferrochelatase family.

The protein localises to the cytoplasm. The catalysed reaction is heme b + 2 H(+) = protoporphyrin IX + Fe(2+). It participates in porphyrin-containing compound metabolism; protoheme biosynthesis; protoheme from protoporphyrin-IX: step 1/1. Catalyzes the ferrous insertion into protoporphyrin IX. The sequence is that of Ferrochelatase from Synechococcus sp. (strain JA-3-3Ab) (Cyanobacteria bacterium Yellowstone A-Prime).